The primary structure comprises 319 residues: MTATQKHNLFTPEPHYIPGYAGFYPQLRYQVGNTYGRTTAQLLTDPSVQKSPCSVLSPMTKPKFIEDFSKSKPPWIPCRDLREPYIPHYTSLKPYKNFEILGQLPRQDVDTQGPPQVENRQGPLTAGFMPYPPYPACPPGRKGEARDLGHPGLLLAYGEEAWKDAAPLQDTPGKNNQLYHCRRDEYLPPHPPQETLDVGRFQRLPQLDHPNLIQRKAISGYAGFVPRFAWVMGMNYRDGVTQAMDDFDKNQFVFRHPVCALGERLPRTHWPNTTIYRSQGLIPFYMGFIPSMQDNYALTFGNSTRRAYQKELDRRSHTL.

Belongs to the CIMIP2 family. In terms of assembly, microtubule inner protein component of sperm flagellar doublet microtubules.

The protein resides in the cytoplasm. The protein localises to the cytoskeleton. It is found in the flagellum axoneme. Functionally, microtubule inner protein (MIP) part of the dynein-decorated doublet microtubules (DMTs) in flagellum axoneme. Binds to the intra-tubulin interfaces. This is Ciliary microtubule inner protein 2A (Cimip2a) from Mus musculus (Mouse).